Consider the following 130-residue polypeptide: Small ribosomal subunit protein uS9 (130 aa).

It belongs to the universal ribosomal protein uS9 family.

This Hahella chejuensis (strain KCTC 2396) protein is Small ribosomal subunit protein uS9.